We begin with the raw amino-acid sequence, 170 residues long: Ribosomal RNA small subunit methyltransferase G (170 aa).

S-adenosyl-L-methionine contacts are provided by residues Gly70, Leu75, 120-121 (AE), and Arg138.

This sequence belongs to the methyltransferase superfamily. RNA methyltransferase RsmG family.

The protein resides in the cytoplasm. Specifically methylates the N7 position of guanine in position 518 of 16S rRNA. In Mycobacterium ulcerans (strain Agy99), this protein is Ribosomal RNA small subunit methyltransferase G.